The chain runs to 255 residues: Glucanase inhibitor protein 4 (255 aa).

The first 21 residues, methionine 1–alanine 21, serve as a signal peptide directing secretion. One can recognise a Peptidase S1 domain in the interval valine 29–histidine 255. A disulfide bridge links cysteine 56 with cysteine 72. Asparagine 90, asparagine 105, asparagine 110, and asparagine 160 each carry an N-linked (GlcNAc...) asparagine glycan. Intrachain disulfides connect cysteine 180–cysteine 192 and cysteine 202–cysteine 235.

This sequence belongs to the peptidase S1 family. In terms of assembly, forms an apoplastic complex with host endoglucanases in tomato leaves during P.infestans infection.

Its subcellular location is the secreted. Functionally, secreted effector that suppresses host plant glucan elicitor-mediated defense responses. Targets host endoglucanases and inhibits the endoglucanase-mediated release of elicitor-active glucan oligosaccharides from P.infestans cell walls. This chain is Glucanase inhibitor protein 4, found in Phytophthora infestans (Potato late blight agent).